The chain runs to 721 residues: MSDSSVREKNDNFRGYRKRGRQELRKIKRSSARTEGGSTETLEDVAEDIDHRSDEDEVSDVDSGDDFDIEDEEGKKEKVYDALLTILKSEHPEPKRRRREADESNKAPAEVGEDEHENTEHGPVDDQLEIENGLLGNHEDDNDDDSSGDEKDIDSEDEQDPFESHFNQVPEKFVDKLSNAFKTKSVKYKSVKGSLSDSESYIYAKPVVIGEEALVESPYRSSSIYSYFLKQRLKVQNGLLDKKTDPLTALQKKLVDPMFQYKDILYEYDSYEKDEDEYRDLYALHVLNHIYKTRDRILKNNQRLQDNPDTEHLDQGFTRPKVLIVVPTREVAYRVVDKIISKSGIDQVDKKGKFYDQFRDDSLPPKSKPKSFQHIFRGNTNDFFVVGLKFTRKAIKLYSNFYQSDIIVCSPLGIQMILENTDKKKRQDDFLSSIELMVIDQLHSIEYQNISHIFTIFDHLNKIPDQQHEADFSRIRMWYINEQAKLFRQTMVFTKYISPAANSLINGRCRNMAGRWKNHKVIGSENSSIGQSGLKIRQIFQRFDIIGNSIIEEPDYRFKFFTSVIIPGIVKSTGYEDGILIYIPDYTDFIRIRNYMKEKTTILFGDINEYSSQRQLNANRSLFQQGRLKVMLYTERLHHYRRYEIKGVKSVVFYKPPNNPEFYNEVVRFIGKNAFLGNTDLNISTVRCIYSKLDGLSLERIVGTKRAAVLSHAQKEIYEFK.

A compositionally biased stretch (basic and acidic residues) spans 1–14 (MSDSSVREKNDNFR). Residues 1–168 (MSDSSVREKN…QDPFESHFNQ (168 aa)) are disordered. Over residues 15 to 31 (GYRKRGRQELRKIKRSS) the composition is skewed to basic residues. A phosphoserine mark is found at S53 and S63. Positions 55–72 (EDEVSDVDSGDDFDIEDE) are enriched in acidic residues. The span at 88–105 (KSEHPEPKRRRREADESN) shows a compositional bias: basic and acidic residues. Residues 140–161 (DDNDDDSSGDEKDIDSEDEQDP) show a composition bias toward acidic residues. S196 bears the Phosphoserine mark.

This sequence belongs to the UTP25 family. As to quaternary structure, interacts with snoRNA U3. Interacts with MPP10, NOP19, RRP9, UTP8 and UTP18. Component of the ribosomal small subunit (SSU) processome composed of at least 40 protein subunits and snoRNA U3.

The protein resides in the nucleus. It localises to the nucleolus. Functionally, DEAD-box RNA helicase-like protein required for pre-18S rRNA processing, specifically at sites A0, A1, and A2. This chain is U3 small nucleolar RNA-associated protein 25 (UTP25), found in Saccharomyces cerevisiae (strain ATCC 204508 / S288c) (Baker's yeast).